Reading from the N-terminus, the 310-residue chain is Olfactory receptor 9Q1 (310 aa).

The Extracellular portion of the chain corresponds to 1-25 (MAEMNLTLVTEFLLIAFTEYPEWAL). An N-linked (GlcNAc...) asparagine glycan is attached at N5. Residues 26 to 46 (PLFLLFLFMYLITVLGNLEMI) traverse the membrane as a helical segment. Topologically, residues 47–54 (ILILMDHQ) are cytoplasmic. The helical transmembrane segment at 55 to 75 (LHAPMYFLLSHLAFMDVCYSS) threads the bilayer. Residues 76 to 99 (ITVPQMLAVLLEHGAALSYTRCAA) lie on the Extracellular side of the membrane. C97 and C189 are oxidised to a cystine. The helical transmembrane segment at 100–120 (QFFLFTFFGSIDCYLLALMAY) threads the bilayer. The Cytoplasmic portion of the chain corresponds to 121–139 (DRYLAVCQPLLYVTILTQQ). Residues 140-160 (ARLSLVAGAYVAGLISALVRT) form a helical membrane-spanning segment. Residues 161–197 (VSAFTLSFCGTSEIDFIFCDLPPLLKLTCGESYTQEV) lie on the Extracellular side of the membrane. The chain crosses the membrane as a helical span at residues 198–217 (LIIMFAIFVIPASMVVILVS). Residues 218-236 (YLFIIVAIMGIPAGSQAKT) lie on the Cytoplasmic side of the membrane. The chain crosses the membrane as a helical span at residues 237–257 (FSTCTSHLTAVSLFFGTLIFM). Residues 258-270 (YLRGNSDQSSEKN) are Extracellular-facing. The helical transmembrane segment at 271–291 (RVVSVLYTEVIPMLNPLIYSL) threads the bilayer. Residues 292–310 (RNKEVKEALRKILNRAKLS) are Cytoplasmic-facing.

The protein belongs to the G-protein coupled receptor 1 family.

Its subcellular location is the cell membrane. Odorant receptor. This Homo sapiens (Human) protein is Olfactory receptor 9Q1 (OR9Q1).